Reading from the N-terminus, the 317-residue chain is Tumor-associated calcium signal transducer 2 (317 aa).

Positions methionine 1–alanine 24 are cleaved as a signal peptide. At glutamine 25–glycine 270 the chain is on the extracellular side. The N-linked (GlcNAc...) asparagine glycan is linked to asparagine 27. Positions threonine 64–cysteine 139 constitute a Thyroglobulin type-1 domain. Cystine bridges form between cysteine 67/cysteine 102, cysteine 113/cysteine 119, and cysteine 121/cysteine 139. Asparagine 114 is a glycosylation site (N-linked (GlcNAc...) asparagine). Asparagine 162 and asparagine 202 each carry an N-linked (GlcNAc...) asparagine glycan. A helical membrane pass occupies residues leucine 271–valine 291. Residues threonine 292–leucine 317 lie on the Cytoplasmic side of the membrane.

This sequence belongs to the EPCAM family.

Its subcellular location is the membrane. In terms of biological role, may function as a growth factor receptor. The chain is Tumor-associated calcium signal transducer 2 (Tacstd2) from Rattus norvegicus (Rat).